Here is a 381-residue protein sequence, read N- to C-terminus: Protein COS8 (381 aa).

Topologically, residues 1–42 are extracellular; the sequence is MKENEVKDEKSVDVLSFKQLEFQKTVLPQDVFRNELTWFCYE. A helical membrane pass occupies residues 43-63; sequence IYKSLAFRIWMLLWLPLSVWW. Residues 64–72 lie on the Cytoplasmic side of the membrane; that stretch reads KLSSNWIHP. A helical membrane pass occupies residues 73 to 93; the sequence is LIVSLLVLFLGPFFVLVICGL. Residues 94-237 are Extracellular-facing; it reads SRKRSLSKQL…WILKRIFNLR (144 aa). A helical transmembrane segment spans residues 238–258; it reads CLPLFLYYFLIVYTSGNADLI. The Cytoplasmic segment spans residues 259-381; sequence SRFLFPVVMF…QSARNEKPLK (123 aa).

This sequence belongs to the DUP/COS family.

It localises to the membrane. The polypeptide is Protein COS8 (COS8) (Saccharomyces cerevisiae (strain ATCC 204508 / S288c) (Baker's yeast)).